A 289-amino-acid chain; its full sequence is MKLAVYGKGGIGKSTTSCNISIALAKRGKKVLQIGCDPKSDSTFTLTGFLIPTIIDTLQAKDYHYEDVWPEDVIYQGYAGVDCVEAGGPPAGAGCGGYVVGETVKLLKEFNAFYEYDVILFDVLGDVVCGGFAAPLNYADYCIIVTDNGFDALFAANRITASVREKARTHPLRLAGLIGNRTKKRDLIEKYVETCPMPILEVLPLIEDIRVSRVKGKTLFEMTESEPTLQFVCDFYLNIADQLLTQPEGVIPRELGDRELFNLLSNFYLNSSNSTNTTLKNETNLFDLV.

ATP is bound by residues Gly10–Thr15 and Lys39. Residue Ser14 coordinates Mg(2+). 2 residues coordinate [4Fe-4S] cluster: Cys95 and Cys129. Asn180 to Arg181 contacts ATP.

This sequence belongs to the NifH/BchL/ChlL family. As to quaternary structure, homodimer. Protochlorophyllide reductase is composed of three subunits; ChlL, ChlN and ChlB. Requires [4Fe-4S] cluster as cofactor.

It is found in the plastid. The protein localises to the chloroplast. It carries out the reaction chlorophyllide a + oxidized 2[4Fe-4S]-[ferredoxin] + 2 ADP + 2 phosphate = protochlorophyllide a + reduced 2[4Fe-4S]-[ferredoxin] + 2 ATP + 2 H2O. It participates in porphyrin-containing compound metabolism; chlorophyll biosynthesis (light-independent). Its function is as follows. Component of the dark-operative protochlorophyllide reductase (DPOR) that uses Mg-ATP and reduced ferredoxin to reduce ring D of protochlorophyllide (Pchlide) to form chlorophyllide a (Chlide). This reaction is light-independent. The L component serves as a unique electron donor to the NB-component of the complex, and binds Mg-ATP. The chain is Light-independent protochlorophyllide reductase iron-sulfur ATP-binding protein from Tetradesmus obliquus (Green alga).